Consider the following 451-residue polypeptide: MGRRYFGTDGIRGTVGDAPITPDFVLRLGYAAGKVLAGSADVAAGSRPTVLIGKDTRVSGYMLEAALEAGFSAAGVDVMLAGPMPTPGVAYLTRALRLSAGVVISASHNPYHDNGIKFFSADGNKLPDDTEAAIEAWLEKPLECAASDGLGKARRLDDAAGRYIEFCKSTFPAAFNLRGLKLVIDCAHGAAYQIAPHVFHELGADVIPIGVAPNGFNINDGVGATAPDALVRAVRANHADLGIALDGDADRLQVVDAAGRLYNGDELLYVLVKDRIVTDGKVEGAVGTLMTNLAVEVALQREGVKFVRAAVGDRYVLEQLREHGWQLGAEGSGHILSLDRHSTGDGIVSALLVLAALKRSGRTLAQMLDGVTLFPQKLINVRMKPGADWKGSASIRAAIDAAEAALAGSGRVLIRASGTEPVLRVMVEAQQAADAVRHAETIADAVRAATT.

Ser-107 serves as the catalytic Phosphoserine intermediate. Mg(2+) is bound by residues Ser-107, Asp-246, Asp-248, and Asp-250. Residue Ser-107 is modified to Phosphoserine.

Belongs to the phosphohexose mutase family. Mg(2+) is required as a cofactor. In terms of processing, activated by phosphorylation.

It catalyses the reaction alpha-D-glucosamine 1-phosphate = D-glucosamine 6-phosphate. Its function is as follows. Catalyzes the conversion of glucosamine-6-phosphate to glucosamine-1-phosphate. This is Phosphoglucosamine mutase from Burkholderia cenocepacia (strain ATCC BAA-245 / DSM 16553 / LMG 16656 / NCTC 13227 / J2315 / CF5610) (Burkholderia cepacia (strain J2315)).